The primary structure comprises 294 residues: Ribosomal protein L11 methyltransferase (294 aa).

S-adenosyl-L-methionine-binding residues include T145, G166, D188, and N230.

It belongs to the methyltransferase superfamily. PrmA family.

The protein resides in the cytoplasm. It carries out the reaction L-lysyl-[protein] + 3 S-adenosyl-L-methionine = N(6),N(6),N(6)-trimethyl-L-lysyl-[protein] + 3 S-adenosyl-L-homocysteine + 3 H(+). Its function is as follows. Methylates ribosomal protein L11. This is Ribosomal protein L11 methyltransferase from Glaesserella parasuis serovar 5 (strain SH0165) (Haemophilus parasuis).